The following is a 358-amino-acid chain: Variant-surface-glycoprotein phospholipase C (358 aa).

The 174-residue stretch at 25 to 198 (IGQVYMVGAH…STRRIFLVVR (174 aa)) folds into the PI-PLC X-box domain.

Monomer. Post-translationally, the N-terminus is blocked.

The protein resides in the membrane. It catalyses the reaction a 6-(alpha-D-glucosaminyl)-1-(1,2-diacyl-sn-glycero-3-phospho)-1D-myo-inositol = 6-(alpha-D-glucosaminyl)-1D-myo-inositol 1,2-cyclic phosphate + a 1,2-diacyl-sn-glycerol. Functionally, by hydrolysis of the attached glycolipid, releases soluble variant surface glycoprotein containing phosphoinositol from the cell wall of T.brucei after cell lysis. It also cleaves similar membrane anchors on some mammalian proteins. VSG lipase may play a role in processes such as parasite differentiation or antigenic variation. This is Variant-surface-glycoprotein phospholipase C from Trypanosoma brucei brucei.